A 238-amino-acid polypeptide reads, in one-letter code: UPF0758 protein Ajs_3450 (238 aa).

One can recognise an MPN domain in the interval 116–238 (VFDSPQAVQH…ALSMAEQGLV (123 aa)). Residues H187, H189, and D200 each coordinate Zn(2+). The JAMM motif motif lies at 187–200 (HNHPSGSVQPSRAD).

It belongs to the UPF0758 family.

The polypeptide is UPF0758 protein Ajs_3450 (Acidovorax sp. (strain JS42)).